Reading from the N-terminus, the 181-residue chain is Large ribosomal subunit protein uL5 (181 aa).

It belongs to the universal ribosomal protein uL5 family. As to quaternary structure, part of the 50S ribosomal subunit; part of the 5S rRNA/L5/L18/L25 subcomplex. Contacts the 5S rRNA and the P site tRNA. Forms a bridge to the 30S subunit in the 70S ribosome.

Functionally, this is one of the proteins that bind and probably mediate the attachment of the 5S RNA into the large ribosomal subunit, where it forms part of the central protuberance. In the 70S ribosome it contacts protein S13 of the 30S subunit (bridge B1b), connecting the 2 subunits; this bridge is implicated in subunit movement. Contacts the P site tRNA; the 5S rRNA and some of its associated proteins might help stabilize positioning of ribosome-bound tRNAs. The chain is Large ribosomal subunit protein uL5 from Helicobacter pylori (strain P12).